A 170-amino-acid chain; its full sequence is Urease accessory protein UreE (170 aa).

The tract at residues 134-170 (ESGAYGGGHHHHGDDGHHPLAPIPLRQKIHRPSDKAE) is disordered.

This sequence belongs to the UreE family.

The protein localises to the cytoplasm. In terms of biological role, involved in urease metallocenter assembly. Binds nickel. Probably functions as a nickel donor during metallocenter assembly. This is Urease accessory protein UreE from Janthinobacterium sp. (strain Marseille) (Minibacterium massiliensis).